We begin with the raw amino-acid sequence, 460 residues long: Serine--tRNA ligase (460 aa).

Basic and acidic residues predominate over residues 43–66 (AEGDGLRQERNEVSSKIGELKQDG). The disordered stretch occupies residues 43–81 (AEGDGLRQERNEVSSKIGELKQDGKDEEAQEAIDRSQEL). 242-244 (TAE) lines the L-serine pocket. Residues 273-275 (RRE) and V289 each bind ATP. Residue E296 coordinates L-serine. 369–372 (EVSS) contributes to the ATP binding site. S405 contacts L-serine.

It belongs to the class-II aminoacyl-tRNA synthetase family. Type-1 seryl-tRNA synthetase subfamily. In terms of assembly, homodimer. The tRNA molecule binds across the dimer.

The protein localises to the cytoplasm. It carries out the reaction tRNA(Ser) + L-serine + ATP = L-seryl-tRNA(Ser) + AMP + diphosphate + H(+). It catalyses the reaction tRNA(Sec) + L-serine + ATP = L-seryl-tRNA(Sec) + AMP + diphosphate + H(+). The protein operates within aminoacyl-tRNA biosynthesis; selenocysteinyl-tRNA(Sec) biosynthesis; L-seryl-tRNA(Sec) from L-serine and tRNA(Sec): step 1/1. Catalyzes the attachment of serine to tRNA(Ser). Is also probably able to aminoacylate tRNA(Sec) with serine, to form the misacylated tRNA L-seryl-tRNA(Sec), which will be further converted into selenocysteinyl-tRNA(Sec). This Haloarcula marismortui (strain ATCC 43049 / DSM 3752 / JCM 8966 / VKM B-1809) (Halobacterium marismortui) protein is Serine--tRNA ligase (serS).